We begin with the raw amino-acid sequence, 101 residues long: Large ribosomal subunit protein bL28 (101 aa).

This sequence belongs to the bacterial ribosomal protein bL28 family.

The chain is Large ribosomal subunit protein bL28 from Methylorubrum populi (strain ATCC BAA-705 / NCIMB 13946 / BJ001) (Methylobacterium populi).